The chain runs to 345 residues: uncharacterized protein (345 aa).

A disordered region spans residues 1-98 (MNDEMKGKSG…ISGKSFIDPE (98 aa)). Basic and acidic residues-rich tracts occupy residues 18–27 (RSDDDSDKRT), 42–68 (SRAD…EDSP), and 76–86 (PGDETPEKADH).

The protein belongs to the class IV-like SAM-binding methyltransferase superfamily. RNA methyltransferase TrmH family.

This is an uncharacterized protein from Escherichia coli O157:H7.